The primary structure comprises 528 residues: Beta-galactoside alpha-2,6-sialyltransferase 2 (528 aa).

Residues 1-10 lie on the Cytoplasmic side of the membrane; the sequence is MKPNLKQWKQ. A helical; Signal-anchor for type II membrane protein membrane pass occupies residues 11–31; sequence LMLFGIFAWGLLFLVIFIYFT. At 32-528 the chain is on the lumenal side; the sequence is DSNSAEPVPS…CPERNNFPPL (497 aa). N-linked (GlcNAc...) asparagine glycosylation is found at asparagine 167, asparagine 308, and asparagine 338. Intrachain disulfides connect cysteine 254-cysteine 519, cysteine 297-cysteine 448, and cysteine 466-cysteine 477.

Belongs to the glycosyltransferase 29 family.

The protein localises to the golgi apparatus. The protein resides in the golgi stack membrane. It carries out the reaction a beta-D-galactoside + CMP-N-acetyl-beta-neuraminate = an N-acetyl-alpha-neuraminyl-(2-&gt;6)-beta-D-galactosyl derivative + CMP + H(+). Its function is as follows. Transfers sialic acid from the donor of substrate CMP-sialic acid to galactose containing acceptor substrates. The sequence is that of Beta-galactoside alpha-2,6-sialyltransferase 2 (ST6GAL2) from Gallus gallus (Chicken).